Reading from the N-terminus, the 861-residue chain is APC membrane recruitment protein 3 (861 aa).

8 disordered regions span residues 1–77 (MELK…PKGG), 179–206 (AEGK…PPGE), 261–289 (PSLE…GPLQ), 351–415 (PLCP…FPRD), 514–558 (RGPT…GGAT), 576–644 (GLLA…SQKE), 716–742 (MLEQ…STQD), and 786–822 (AHGS…SQQE). The span at 362 to 384 (SKASSIDTGTPKSEQPESVSTSD) shows a compositional bias: polar residues. A compositionally biased stretch (pro residues) spans 518-530 (PRAPPTPGQPAAP). Low complexity predominate over residues 584–595 (ALGGATQGTGTL). Over residues 598 to 609 (DASREEETRGHS) the composition is skewed to basic and acidic residues. 2 stretches are compositionally biased toward polar residues: residues 615 to 629 (SMES…TSGK) and 719 to 730 (QKQSSSSPSMTT).

Belongs to the Amer family.

It localises to the cell membrane. Functionally, regulator of the canonical Wnt signaling pathway. Acts by specifically binding phosphatidylinositol 4,5-bisphosphate (PtdIns(4,5)P2), translocating to the cell membrane. This is APC membrane recruitment protein 3 (AMER3) from Homo sapiens (Human).